Here is a 117-residue protein sequence, read N- to C-terminus: Replication initiation control protein YabA (117 aa).

Zn(2+)-binding residues include H87, C89, C103, and C106.

It belongs to the YabA family. Homotetramer. Interacts with both DnaA and DnaN, acting as a bridge between these two proteins. Requires Zn(2+) as cofactor.

It is found in the cytoplasm. The protein resides in the nucleoid. Functionally, involved in control of chromosome replication initiation. Inhibits the cooperative binding of DnaA to the oriC region, thus negatively regulating initiation of chromosome replication. Inhibits the ability of DnaA-ATP to form a helix on DNA; does not disassemble preformed DnaA-DNA helices. Decreases the residence time of DnaA on the chromosome at its binding sites (oriC, replication forks and promoter-binding sites). Tethers DnaA to the replication machinery via the DNA polymerase beta sliding clamp subunit (dnaN). Associates with oriC and other DnaA targets on the chromosome in a DnaA-dependent manner. The sequence is that of Replication initiation control protein YabA from Latilactobacillus sakei subsp. sakei (strain 23K) (Lactobacillus sakei subsp. sakei).